Here is a 524-residue protein sequence, read N- to C-terminus: Probable plastidic glucose transporter 1 (524 aa).

Transmembrane regions (helical) follow at residues 88-108 (MANFLFGYHIGVMNGPIVSIA), 122-142 (LVVSIFIAGAFIGSIVAGPLV), 151-171 (FQIFTIPLILGALVSAQAHSL), 179-199 (FLVGLGIGVNTVLVPIYISEV), 208-228 (LGTLCQIGTCLGIIFSLLLGI), 239-259 (TMLYVASMPGFLLALGMQFAV), 320-340 (VAFIGGSLFVLQQFAGINGVL), 357-377 (QASLYVGVTNFAGALCASYLI), 386-406 (LIGSYLGMAVSMFLIVYAVGF), 420-440 (GTLMYIFSFAIGAGPVTGLII), 452-472 (IMGFSFSVHWVSNFLVGLFFL), and 483-503 (VYASFGSVSLLAAAFSHLFTV).

It belongs to the major facilitator superfamily. Sugar transporter (TC 2.A.1.1) family.

The protein resides in the plastid. It localises to the chloroplast membrane. May be involved in the efflux of glucose towards the cytosol. The polypeptide is Probable plastidic glucose transporter 1 (Arabidopsis thaliana (Mouse-ear cress)).